A 175-amino-acid polypeptide reads, in one-letter code: Cytochrome c homolog (175 aa).

The Cytoplasmic portion of the chain corresponds to 1–8 (MTGKELNK). Residues 9 to 29 (IVAAILFASLIAMIVRFVANI) form a helical; Signal-anchor membrane-spanning segment. At 30 to 175 (LYKPNLQVLN…LFLKNYVHDK (146 aa)) the chain is on the periplasmic side. Heme c is bound by residues cysteine 84, cysteine 87, histidine 88, and methionine 150.

This sequence belongs to the cytochrome c family. In terms of processing, binds 1 heme c group covalently per subunit.

It localises to the cell membrane. In terms of biological role, may be involved in electron transfer from bc1 complex to aa3. The protein is Cytochrome c homolog (cycM) of Rickettsia typhi (strain ATCC VR-144 / Wilmington).